Consider the following 216-residue polypeptide: NKG2-D type II integral membrane protein (216 aa).

Residues 1-51 (MGWIRGRRSRHSWEMSEFHNYNLDLKKSDFSTRWQKQRCPVVKSKCRENAS) are Cytoplasmic-facing. Residues 52-72 (PFFFCCFIAVAMGIRFIIMVT) traverse the membrane as a helical; Signal-anchor for type II membrane protein segment. Over 73–216 (IWSAVFLNSL…NTYICMQRTV (144 aa)) the chain is Extracellular. 4 disulfide bridges follow: cysteine 96–cysteine 105, cysteine 99–cysteine 110, cysteine 127–cysteine 211, and cysteine 189–cysteine 203. Positions 98-213 (PCPKNWICYK…STPNTYICMQ (116 aa)) constitute a C-type lectin domain. N-linked (GlcNAc...) asparagine glycosylation is found at asparagine 131, asparagine 163, and asparagine 202.

Homodimer; disulfide-linked. Heterohexamer composed of two subunits of KLRK1 and four subunits of HCST/DAP10. Interacts (via transmembrane domain) with HCST/DAP10 (via transmembrane domain); the interaction is required for KLRK1 NK cell surface and induces NK cell-mediated cytotoxicity. Does not interact with TYROBP. Interacts with CEACAM1; recruits PTPN6 that dephosphorylates VAV1. As to expression, expressed in natural killer (NK) cells, CD8(+) alpha-beta and gamma-delta T-cells. Expressed on essentially all CD56+CD3- NK cells from freshly isolated PBMC. Expressed in interferon-producing killer dendritic cells (IKDCs).

The protein localises to the cell membrane. Functions as an activating and costimulatory receptor involved in immunosurveillance upon binding to various cellular stress-inducible ligands displayed at the surface of autologous tumor cells and virus-infected cells. Provides both stimulatory and costimulatory innate immune responses on activated killer (NK) cells, leading to cytotoxic activity. Acts as a costimulatory receptor for T-cell receptor (TCR) in CD8(+) T-cell-mediated adaptive immune responses by amplifying T-cell activation. Stimulates perforin-mediated elimination of ligand-expressing tumor cells. Signaling involves calcium influx, culminating in the expression of TNF-alpha. Participates in NK cell-mediated bone marrow graft rejection. May play a regulatory role in differentiation and survival of NK cells. Binds to ligands belonging to various subfamilies of MHC class I-related glycoproteins including MICA, MICB, RAET1E, RAET1G, RAET1L/ULBP6, ULBP1, ULBP2, ULBP3 (ULBP2&gt;ULBP1&gt;ULBP3) and ULBP4. The chain is NKG2-D type II integral membrane protein (KLRK1) from Homo sapiens (Human).